Consider the following 532-residue polypeptide: MAAIYLLIAALIASSHALAAHGAGGGVPLAAAAPLPFPGDLAASGKLRTDPNATVPASMDFGNITAALPAAVLFPGSPGDVAELLRAAYAAPGRPFTVSFRGRGHSTMGQALAAGGVVVHMQSMGGGGAPRINVSADGAYVDAGGEQLWVDVLRAALARGVAPRSWTDYLHLTVGGTLSNAGVSGQTYRHGPQISNVLELDVITGHGETVTCSKAVNSDLFDAVLGGLGQFGVITRARVAVEPAPARARWVRLVYADFAAFSADQERLVAARPDGSHGPWSYVEGAVYLAGRGLAVALKSSGGFFSDADAARVVALAAARNATAVYSIEATLNYAANATPSSVDAAVAAALGDLHFEEGFSFSRDVTYEEFLDRVYGEEEALEKAGLWRVPHPWLNLFVPGSRIADFDRGVFKGILQTATDIAGPLIIYPVNKSKWDAAMSAVTPEGEEEVFYVVSLLFSAVANDVAALEAQNRRILRFCDLAGIGYKAYLAHYDSRGDWVRHFGAKWDRFVQRKDKYDPKKLLSPGQDIFN.

The first 17 residues, 1 to 17 (MAAIYLLIAALIASSHA), serve as a signal peptide directing secretion. Asn52 and Asn63 each carry an N-linked (GlcNAc...) asparagine glycan. Residues 65 to 244 (TAALPAAVLF…TRARVAVEPA (180 aa)) form the FAD-binding PCMH-type domain. FAD contacts are provided by Phe100, Gly102, Arg103, and Gly104. His105 is modified (pros-8alpha-FAD histidine). FAD-binding residues include Ser106 and Gln110. N-linked (GlcNAc...) asparagine glycosylation occurs at Asn133. Residues Asp168, Thr173, Ser179, Val183, and Ile234 each contribute to the FAD site. Residues Asn321 and Asn432 are each glycosylated (N-linked (GlcNAc...) asparagine). FAD contacts are provided by Tyr490, Ser525, and Gln528.

The protein belongs to the oxygen-dependent FAD-linked oxidoreductase family. As to quaternary structure, monomer. FAD is required as a cofactor.

It localises to the secreted. Its subcellular location is the extracellular space. It carries out the reaction N(6)-dimethylallyladenine + A + H2O = 3-methyl-2-butenal + adenine + AH2. Its function is as follows. Catalyzes the oxidation of cytokinins, a family of N(6)-substituted adenine derivatives that are plant hormones, where the substituent is an isopentenyl group. In Oryza sativa subsp. japonica (Rice), this protein is Cytokinin dehydrogenase 1 (CKX1).